The sequence spans 1073 residues: MIKASKCNKARALFLVRTSIPRTFIRNATSAIPTTVKLKDLSSLPPLTKSLPTNLPFLMPDTLHNLLRFDSKKEKQPSTDKSNDKDKPSRKEKGKDKEKENEERKDINEDEKYDIKEETDSKPTIDPNNPVSSKSSISSSSGGANNNNNNDDSDGRDDDGSPKDKEFLSPSDAGLHPPFLAIAMKDRPFLPGATRHLHVTDPEVIKCVNHMINSNIKSPYFVLFHVRDTNSEDAALDVIKDRDFVHEVGTLCQIIKTTGSEILVYPHYRVKLVDISTPNSRSERIEMEQDNSQTSYLKKFEVSYAVTQQLKDEPYDEQSITINAWTRRIKELYEKLAPKYEQPENKEEIMNNPSMLADFIASKVHAKPEQIQQILESSNVETKLELSLQLLQVEADADEMRQTALKNIRERTEKAYAQSLIKEYTKELLKAAGIGENSKVHKFDERIKHLKMPEEAMKAYKTEKERLGTQSDMEQNVVERYLDWLTQIPFGVYTKDSFNVKKAREILDRDHYGLKDVKDRILEFISVGKISGNVDGRILCLAGPPGTGKTSIAKSIAEALNRKYTRIAVGGVQDVHDVKGHRRTYVASIPGRIVTALTQAKTSNPLMLIDEIDKLDTTSHGGAARAFLEILDPEQNNSFVDNFIEVKVDLSKVLFVCTANYLGSIPAPLRDRMEIIEVNGYTKNDKIEITKRHLIPAAAKKVGLEEGRVVIPDETILRLIDKYCRESGLRHIKSLINRIFSKASRKIVEELEDTDADPHSREIVEESLVAKENESVISDKAKKDAGSSSIESNDSNTEAKVSTTTENEKKQEQKQKQDEEIKKLDLPADLKIEVKPETLKDFVGPEIYIKDRLYETLNPGVATGLAYNTSGDGDALYIESILTDSISSDLGNAGLHVTGSLKEVMKESASIAYSFAKQFMVRQFPDNRFFEAAHIHVHCPGGAIPKDGPSAGIAFTSSLVSLALNKSLPNDTAMTGEITLTGKVLAIGGLREKSLGAKRAGYTKIIFPKDCEYQLDEIPDEVKEGLTYIPVEWYSEVFEHLFKGISKEEGNSVWKEEFAKLEEKKKSKKTHTV.

A mitochondrion-targeting transit peptide spans 1-27 (MIKASKCNKARALFLVRTSIPRTFIRN). 2 stretches are compositionally biased toward basic and acidic residues: residues 69 to 107 (FDSKKEKQPSTDKSNDKDKPSRKEKGKDKEKENEERKDI) and 113 to 123 (YDIKEETDSKP). A disordered region spans residues 69–173 (FDSKKEKQPS…DKEFLSPSDA (105 aa)). Residues 132–150 (SSKSSISSSSGGANNNNNN) are compositionally biased toward low complexity. The span at 158–167 (DDGSPKDKEF) shows a compositional bias: basic and acidic residues. The Lon N-terminal domain occupies 177–395 (PPFLAIAMKD…LSLQLLQVEA (219 aa)). 543-550 (GPPGTGKT) is an ATP binding site. Over residues 775–785 (SVISDKAKKDA) the composition is skewed to basic and acidic residues. The tract at residues 775–821 (SVISDKAKKDAGSSSIESNDSNTEAKVSTTTENEKKQEQKQKQDEEI) is disordered. Residues 790 to 805 (IESNDSNTEAKVSTTT) show a composition bias toward polar residues. Residues 806–821 (ENEKKQEQKQKQDEEI) show a composition bias toward basic and acidic residues. A Lon proteolytic domain is found at 856-1044 (TLNPGVATGL…SEVFEHLFKG (189 aa)). Catalysis depends on residues S950 and K993.

It belongs to the peptidase S16 family. In terms of assembly, homohexamer or homoheptamer. Organized in a ring with a central cavity.

The protein localises to the mitochondrion matrix. It carries out the reaction Hydrolysis of proteins in presence of ATP.. In terms of biological role, ATP-dependent serine protease that mediates the selective degradation of misfolded, unassembled or oxidatively damaged polypeptides as well as certain short-lived regulatory proteins in the mitochondrial matrix. May also have a chaperone function in the assembly of inner membrane protein complexes. Participates in the regulation of mitochondrial gene expression and in the maintenance of the integrity of the mitochondrial genome. Binds to mitochondrial DNA in a site-specific manner. The sequence is that of Lon protease homolog, mitochondrial from Candida dubliniensis (strain CD36 / ATCC MYA-646 / CBS 7987 / NCPF 3949 / NRRL Y-17841) (Yeast).